The following is a 922-amino-acid chain: Translation initiation factor IF-2 (922 aa).

Residues 243 to 329 form a disordered region; it reads AAREAAKLAE…GKSKSGQEET (87 aa). Residues 250–264 show a composition bias toward low complexity; sequence LAEAQKAAAPAPAAP. Residues 267–298 show a composition bias toward basic and acidic residues; the sequence is KTLHKPDKPAAAKGAKGPDKKPAGAWKDDAAR. In terms of domain architecture, tr-type G spans 422 to 589; it reads ARPPVVTVMG…AILLQAEVLE (168 aa). The tract at residues 431–438 is G1; the sequence is GHVDHGKT. GTP is bound at residue 431 to 438; the sequence is GHVDHGKT. The interval 456 to 460 is G2; that stretch reads GITQH. The interval 477 to 480 is G3; it reads DTPG. Residues 477–481 and 531–534 contribute to the GTP site; these read DTPGH and NKID. A G4 region spans residues 531-534; it reads NKID. Residues 567-569 are G5; sequence SAK.

The protein belongs to the TRAFAC class translation factor GTPase superfamily. Classic translation factor GTPase family. IF-2 subfamily.

Its subcellular location is the cytoplasm. One of the essential components for the initiation of protein synthesis. Protects formylmethionyl-tRNA from spontaneous hydrolysis and promotes its binding to the 30S ribosomal subunits. Also involved in the hydrolysis of GTP during the formation of the 70S ribosomal complex. The protein is Translation initiation factor IF-2 of Thiobacillus denitrificans (strain ATCC 25259 / T1).